Consider the following 424-residue polypeptide: Glutamate-1-semialdehyde 2,1-aminomutase (424 aa).

The residue at position 263 (Lys-263) is an N6-(pyridoxal phosphate)lysine.

It belongs to the class-III pyridoxal-phosphate-dependent aminotransferase family. HemL subfamily. As to quaternary structure, homodimer. It depends on pyridoxal 5'-phosphate as a cofactor.

The protein resides in the cytoplasm. It catalyses the reaction (S)-4-amino-5-oxopentanoate = 5-aminolevulinate. It functions in the pathway porphyrin-containing compound metabolism; protoporphyrin-IX biosynthesis; 5-aminolevulinate from L-glutamyl-tRNA(Glu): step 2/2. This is Glutamate-1-semialdehyde 2,1-aminomutase from Campylobacter jejuni subsp. jejuni serotype O:2 (strain ATCC 700819 / NCTC 11168).